The primary structure comprises 215 residues: Peptide methionine sulfoxide reductase MsrA (215 aa).

The active site involves C58.

It belongs to the MsrA Met sulfoxide reductase family.

The enzyme catalyses L-methionyl-[protein] + [thioredoxin]-disulfide + H2O = L-methionyl-(S)-S-oxide-[protein] + [thioredoxin]-dithiol. It catalyses the reaction [thioredoxin]-disulfide + L-methionine + H2O = L-methionine (S)-S-oxide + [thioredoxin]-dithiol. Functionally, has an important function as a repair enzyme for proteins that have been inactivated by oxidation. Catalyzes the reversible oxidation-reduction of methionine sulfoxide in proteins to methionine. The chain is Peptide methionine sulfoxide reductase MsrA from Pseudomonas aeruginosa (strain UCBPP-PA14).